The sequence spans 474 residues: Variant surface glycoprotein MITAT 1.5 (474 aa).

A signal peptide spans 1–22 (MIHSNKVATVVLALISSWPADG). 2 disulfides stabilise this stretch: Cys-37–Cys-161 and Cys-144–Cys-214. 2 N-linked (GlcNAc...) asparagine glycosylation sites follow: Asn-74 and Asn-95. N-linked (GlcNAc...) asparagine glycosylation occurs at Asn-329. Residues 388 to 449 (AKDGEGQKNQ…ETDEPDKEKC (62 aa)) are disordered. Composition is skewed to basic and acidic residues over residues 414–423 (TNKEACEKEN) and 435–449 (KGKDGETDEPDKEKC). A lipid anchor (GPI-anchor amidated asparagine) is attached at Asn-451. The propeptide at 452 to 474 (GSFLTSKQFAFSVVSAAFMALLF) is removed in mature form.

Its subcellular location is the cell membrane. In terms of biological role, VSG forms a coat on the surface of the parasite. The trypanosome evades the immune response of the host by expressing a series of antigenically distinct VSGs from an estimated 1000 VSG genes. The sequence is that of Variant surface glycoprotein MITAT 1.5 from Trypanosoma brucei brucei.